Here is a 283-residue protein sequence, read N- to C-terminus: Circadian clock oscillator protein KaiA (283 aa).

The psR domain, binds oxidized quinones stretch occupies residues 3 to 133; it reads QSTALTICGL…VKLCPGCAVP (131 aa). The KaiA N-terminal domain maps to 3–163; it reads QSTALTICGL…RLSQKLKERL (161 aa). Positions 164–172 are flexible linker; sequence GYLGVYYKR. Positions 173-281 constitute a KaiA C-terminal domain; that stretch reads DTAFFFRRMS…CEMYRRSIPR (109 aa).

Homodimer. The KaiABC complex composition changes during the circadian cycle to control KaiC phosphorylation. Complexes KaiC(6), KaiA(2-4):KaiC(6), KaiB(6):KaiC(6) and KaiC(6):KaiB(6):KaiA(12) are among the most important forms, many form cooperatively. KaiA and CikA bind to the same region of the KaiB(fs) form and therefore compete.

Its function is as follows. Key component of the KaiABC oscillator complex, which constitutes the main circadian regulator in cyanobacteria. Complex composition changes during the circadian cycle to control KaiC phosphorylation. KaiA stimulates KaiC autophosphorylation, while KaiB sequesters KaiA, leading to KaiC autodephosphorylation. KaiA binding to the KaiC CII domain during the subjective day yields KaiA(2-4):KaiC(6) complexes which stimulate KaiC autophosphorylation. Phospho-Ser-431 KaiC accumulation triggers binding of KaiB during the subjective night to form the KaiB(6):KaiC(6) complex, leading to changes in the output regulators CikA and SasA. KaiB(6):KaiC(6) formation exposes a site for KaiA binding on KaiB that sequesters KaiA from KaiC's CII domain, making the KaiC(6):KaiB(6):KaiA(12) complex resulting in KaiC autodephosphorylation. Complete dephosphorylation of KaiC leads to dissociation of KaiA(2):KaiB(1), completing 1 cycle of the Kai oscillator. Functionally, binds oxidized quinones via the N-terminal PsR domain, allowing it to sense redox changes and possibly mediate clock input. The protein is Circadian clock oscillator protein KaiA of Thermostichus vulcanus (Synechococcus vulcanus).